A 327-amino-acid chain; its full sequence is Cobalamin biosynthesis protein CobD (327 aa).

Transmembrane regions (helical) follow at residues 61-78, 80-102, 160-182, and 300-322; these read MWLT…GLVI, SILP…ILLA, GIVA…YKFI, and AALV…ASLV.

It belongs to the CobD/CbiB family.

It localises to the cell membrane. Its pathway is cofactor biosynthesis; adenosylcobalamin biosynthesis. Converts cobyric acid to cobinamide by the addition of aminopropanol on the F carboxylic group. The sequence is that of Cobalamin biosynthesis protein CobD from Brucella melitensis biotype 1 (strain ATCC 23456 / CCUG 17765 / NCTC 10094 / 16M).